The sequence spans 340 residues: Glycerol-3-phosphate dehydrogenase [NAD(P)+] (340 aa).

The NADPH site is built by S11, W12, R33, and K106. K106, G137, and S139 together coordinate sn-glycerol 3-phosphate. Residue A141 participates in NADPH binding. Positions 192, 245, 255, 256, and 257 each coordinate sn-glycerol 3-phosphate. Residue K192 is the Proton acceptor of the active site. Position 256 (R256) interacts with NADPH. NADPH is bound by residues V280 and E282.

Belongs to the NAD-dependent glycerol-3-phosphate dehydrogenase family.

It localises to the cytoplasm. It catalyses the reaction sn-glycerol 3-phosphate + NAD(+) = dihydroxyacetone phosphate + NADH + H(+). It carries out the reaction sn-glycerol 3-phosphate + NADP(+) = dihydroxyacetone phosphate + NADPH + H(+). It participates in membrane lipid metabolism; glycerophospholipid metabolism. In terms of biological role, catalyzes the reduction of the glycolytic intermediate dihydroxyacetone phosphate (DHAP) to sn-glycerol 3-phosphate (G3P), the key precursor for phospholipid synthesis. The polypeptide is Glycerol-3-phosphate dehydrogenase [NAD(P)+] (Bacillus cereus (strain 03BB102)).